Here is a 396-residue protein sequence, read N- to C-terminus: Tetracycline resistance protein, class C (396 aa).

Over 1–6 the chain is Cytoplasmic; that stretch reads MKSNNA. A helical transmembrane segment spans residues 7 to 27; it reads LIVILGTVTLDAVGIGLVMPV. Topologically, residues 28–45 are periplasmic; the sequence is LPGLLRDIVHSDSIASHY. A helical membrane pass occupies residues 46-66; sequence GVLLALYALMQFLCAPVLGAL. The Cytoplasmic segment spans residues 67 to 79; sequence SDRFGRRPVLLAS. Residues 80 to 100 form a helical membrane-spanning segment; that stretch reads LLGATIDYAIMATTPVLWILY. Over 101–103 the chain is Periplasmic; it reads AGR. The chain crosses the membrane as a helical span at residues 104–124; the sequence is IVAGITGATGAVAGAYIADIT. Residues 125-138 lie on the Cytoplasmic side of the membrane; sequence DGEDRARHFGLMSA. The helical transmembrane segment at 139–159 threads the bilayer; the sequence is CFGVGMVAGPVAGGLLGAISL. H160 is a topological domain (periplasmic). A helical transmembrane segment spans residues 161 to 181; the sequence is APFLAAAVLNGLNLLLGCFLM. Over 182–210 the chain is Cytoplasmic; sequence QESHKGERRPMPLRAFNPVSSFRWARGMT. Residues 211 to 231 form a helical membrane-spanning segment; it reads IVAALMTVFFIMQLVGQVPAA. Residues 232-246 lie on the Periplasmic side of the membrane; that stretch reads LWVIFGEDRFRWSAT. A helical membrane pass occupies residues 247 to 267; sequence MIGLSLAVFGILHALAQAFVT. The Cytoplasmic portion of the chain corresponds to 268–277; that stretch reads GPATKRFGEK. Residues 278-298 traverse the membrane as a helical segment; it reads QAIIAGMAADALGYVLLAFAT. R299 is a topological domain (periplasmic). Residues 300–320 traverse the membrane as a helical segment; that stretch reads GWMAFPIMILLASGGIGMPAL. Residues 321–339 are Cytoplasmic-facing; that stretch reads QAMLSRQVDDDHQGQLQGS. Residues 340–360 form a helical membrane-spanning segment; sequence LAALTSLTSITGPLIVTAIYA. Residues 361–364 are Periplasmic-facing; sequence ASAS. A helical membrane pass occupies residues 365–385; sequence TWNGLAWIVGAALYLVCLPAL. The Cytoplasmic portion of the chain corresponds to 386-396; it reads RRGAWSRATST.

This sequence belongs to the major facilitator superfamily. TCR/Tet family.

The protein resides in the cell inner membrane. In terms of biological role, resistance to tetracycline by an active tetracycline efflux. This is an energy-dependent process that decreases the accumulation of the antibiotic in whole cells. This protein functions as a metal-tetracycline/H(+) antiporter. The polypeptide is Tetracycline resistance protein, class C (tetA) (Escherichia coli).